The sequence spans 318 residues: tRNA dimethylallyltransferase (318 aa).

9–16 contacts ATP; the sequence is GATASGKT. 11–16 contributes to the substrate binding site; that stretch reads TASGKT. Interaction with substrate tRNA stretches follow at residues 34–37 and 158–162; these read DSAQ and QRIIR.

This sequence belongs to the IPP transferase family. In terms of assembly, monomer. The cofactor is Mg(2+).

The catalysed reaction is adenosine(37) in tRNA + dimethylallyl diphosphate = N(6)-dimethylallyladenosine(37) in tRNA + diphosphate. Its function is as follows. Catalyzes the transfer of a dimethylallyl group onto the adenine at position 37 in tRNAs that read codons beginning with uridine, leading to the formation of N6-(dimethylallyl)adenosine (i(6)A). The protein is tRNA dimethylallyltransferase of Dichelobacter nodosus (strain VCS1703A).